The primary structure comprises 398 residues: Apolipoprotein L1 (398 aa).

The N-terminal stretch at 1–27 (MEGAALLRVSVLCIWMSALFLGVGVRA) is a signal peptide. Positions 35–47 (QQNVPSGTDTGDP) are enriched in polar residues. The interval 35–55 (QQNVPSGTDTGDPQSKPLGDW) is disordered. N-linked (GlcNAc...) asparagine glycosylation occurs at asparagine 261. Residues 297–317 (PHASASRPRVTEPISAESGEQ) form a disordered region. 2 positions are modified to phosphoserine; by FAM20C: serine 311 and serine 314.

This sequence belongs to the apolipoprotein L family. As to quaternary structure, in plasma, interacts with APOA1 and mainly associated with large high density lipoprotein particles. Post-translationally, phosphorylated by FAM20C in the extracellular medium. In terms of tissue distribution, plasma. Found on APOA-I-containing high density lipoprotein (HDL3). Expressed in pancreas, lung, prostate, liver, placenta and spleen.

The protein resides in the secreted. May play a role in lipid exchange and transport throughout the body. May participate in reverse cholesterol transport from peripheral cells to the liver. This is Apolipoprotein L1 (APOL1) from Homo sapiens (Human).